The chain runs to 194 residues: CASP-like protein 1D1 (194 aa).

The span at Met1–Thr16 shows a compositional bias: basic and acidic residues. Residues Met1 to Thr23 are disordered. At Met1–Gln31 the chain is on the cytoplasmic side. The helical transmembrane segment at Val32–Ser52 threads the bilayer. Topologically, residues Lys53–Ala77 are extracellular. A helical membrane pass occupies residues Leu78–Val98. Over Thr99 to Ser109 the chain is Cytoplasmic. The chain crosses the membrane as a helical span at residues Ala110 to Ala130. The Extracellular segment spans residues Thr131–His163. A helical membrane pass occupies residues Val164–Ile184. The Cytoplasmic portion of the chain corresponds to Ser185–Arg194.

Belongs to the Casparian strip membrane proteins (CASP) family. Homodimer and heterodimers.

The protein localises to the cell membrane. The sequence is that of CASP-like protein 1D1 from Arabidopsis lyrata subsp. lyrata (Lyre-leaved rock-cress).